A 2792-amino-acid chain; its full sequence is E3 ubiquitin-protein ligase UBR5 (2792 aa).

T2 bears the N-acetylthreonine mark. A compositionally biased stretch (basic and acidic residues) spans 77-88 (DRLELGKPDNND). The tract at residues 77 to 175 (DRLELGKPDN…DRGSGLLGSQ (99 aa)) is disordered. Positions 94–111 (SSSGTGRTSRPGRTSDSP) are enriched in low complexity. Position 110 is a phosphoserine (S110). Residues 135–144 (GVGGSGGGSS) are compositionally biased toward gly residues. The UBA domain maps to 184 to 226 (VIPEELISQAQVVLQGKSRSVIIRELQRTNLDVNLAVNNLLSR). Position 321 is a phosphoserine (S321). Positions 322–341 (FDNERGSTSKEGESNPDKKN) are enriched in basic and acidic residues. The tract at residues 322–347 (FDNERGSTSKEGESNPDKKNTPVQSP) is disordered. 2 positions are modified to phosphoserine: S346 and S572. Residues 577–598 (KSMEKASKTLETKPESKQEPVK) are compositionally biased toward basic and acidic residues. Residues 577–642 (KSMEKASKTL…APREEEKVNE (66 aa)) are disordered. Phosphoserine is present on S606. Residues 608-622 (ASTCSDASSIASSAS) are compositionally biased toward low complexity. At T631 the chain carries Phosphothreonine. Phosphoserine occurs at positions 802, 922, and 1012. Disordered regions lie at residues 993 to 1029 (AGLG…SMDP) and 1046 to 1069 (TAAT…EPSV). Pro residues predominate over residues 1011 to 1027 (VSPPIAPPSWVPDPPSM). The span at 1046 to 1067 (TAATGSGQGPSTSTIPGPSTEP) shows a compositional bias: polar residues. T1109 and T1129 each carry phosphothreonine. The segment at 1171–1239 (DTCSFTWTGA…EKCKCKTLIA (69 aa)) adopts a UBR-type zinc-finger fold. Residues S1221, S1302, S1349, S1369, and S1475 each carry the phosphoserine modification. The segment at 1293 to 1312 (REDRNRKTASPEDSDMPDHD) is disordered. The tract at residues 1509-1734 (SVEPLPPRPS…PSSTSTPAAS (226 aa)) is disordered. Over residues 1518–1531 (SSDQASSSSQSQSS) the composition is skewed to low complexity. Positions 1532–1547 (YIIRNPQQRRISQSQP) are enriched in polar residues. Position 1543 is a phosphoserine (S1543). Composition is skewed to acidic residues over residues 1553 to 1568 (EEQD…EVEV) and 1599 to 1608 (HDEDGSDMEL). A compositionally biased stretch (polar residues) spans 1623 to 1632 (NHSNQDNASG). Composition is skewed to low complexity over residues 1635 to 1651 (SVVT…ASSV), 1662 to 1675 (SNDS…SSQS), and 1720 to 1734 (AAST…PAAS). Phosphothreonine is present on T1730. S1735 bears the Phosphoserine mark. The residue at position 1740 (Y1740) is a Phosphotyrosine. S1774 bears the Phosphoserine mark. The segment at 1853–1884 (LASAGDPGHPNHPLHASQNSARRERMTAREEA) is disordered. The span at 1873 to 1884 (ARRERMTAREEA) shows a compositional bias: basic and acidic residues. T1963 carries the post-translational modification Phosphothreonine. The interval 1978–2015 (GIDNEDSEHENDDDTSQSATLNDKDDDSLPAETGQNHP) is disordered. A compositionally biased stretch (acidic residues) spans 1979–1992 (IDNEDSEHENDDDT). Phosphoserine is present on residues S1984, S2020, and S2022. A Phosphothreonine modification is found at T2024. Position 2070 is a phosphoserine (S2070). A disordered region spans residues 2111–2137 (RQKKEGEEQSLLAEEADSSKPGPSAPD). Position 2207 is a phosphothreonine (T2207). 2 positions are modified to phosphoserine: S2235 and S2283. The disordered stretch occupies residues 2317–2387 (HTSLMQRLRN…SDDPDPLPAH (71 aa)). Basic and acidic residues-rich tracts occupy residues 2326 to 2342 (NRGE…EMRR) and 2350 to 2362 (SRRD…RRQL). The PABC domain occupies 2371–2448 (PASEGNPSDD…AMELIIAHGR (78 aa)). The HECT domain occupies 2455–2792 (ILDLGLLDSS…AIKTKNFGFV (338 aa)). 3 positions are modified to phosphoserine: S2463, S2477, and S2479. The tract at residues 2467–2494 (VQENRKRHGSSRSVVDMDLEDTDDGDDN) is disordered. Positions 2483–2493 (MDLEDTDDGDD) are enriched in acidic residues. The active-site Glycyl thioester intermediate is the C2761.

This sequence belongs to the UBR5 family. Homotetramer; composed of a dimer of dimers. Associates with CDK9 and TFIIS/TCEA1 and forms a transcription regulatory complex made of CDK9, RNAP II, UBR5 and TFIIS/TCEA1 that can stimulate target gene transcription (e.g. gamma fibrinogen/FGG) by recruiting their promoters. Associates with the E3 ligase complex containing DYRK2, EDD/UBR5, DDB1 and DCAF1 proteins (EDVP complex). Binds TOPBP1. Interacts with PIH1D1. Interacts with CIB1.

It is found in the nucleus. Its subcellular location is the cytoplasm. The catalysed reaction is S-ubiquitinyl-[E2 ubiquitin-conjugating enzyme]-L-cysteine + [acceptor protein]-L-lysine = [E2 ubiquitin-conjugating enzyme]-L-cysteine + N(6)-ubiquitinyl-[acceptor protein]-L-lysine.. It participates in protein modification; protein ubiquitination. In terms of biological role, E3 ubiquitin-protein ligase involved in different protein quality control pathways in the cytoplasm and nucleus. Mainly acts as a ubiquitin chain elongator that extends pre-ubiquitinated substrates. Component of the N-end rule pathway: ubiquitinates proteins bearing specific N-terminal residues that are destabilizing according to the N-end rule, leading to their degradation. Recognizes type-1 N-degrons, containing positively charged amino acids (Arg, Lys and His). Together with UBR4, part of a cytoplasm protein quality control pathway that prevents protein aggregation by catalyzing assembly of heterotypic 'Lys-11'-/'Lys-48'-linked branched ubiquitin chains on aggregated proteins, leading to substrate recognition by the segregase p97/VCP and degradation by the proteasome: UBR5 is probably branching multiple 'Lys-48'-linked chains of substrates initially modified with mixed conjugates by UBR4. Together with ITCH, catalyzes 'Lys-48'-/'Lys-63'-branched ubiquitination of TXNIP, leading to its degradation: UBR5 mediates branching of 'Lys-48'-linked chains of substrates initially modified with 'Lys-63'-linked conjugates by ITCH. Catalytic component of a nuclear protein quality control pathway that mediates ubiquitination and degradation of unpaired transcription factors (i.e. transcription factors that are not assembled into functional multiprotein complexes): specifically recognizes and binds degrons that are not accessible when transcription regulators are associated with their coactivators. Ubiquitinates various unpaired transcription regulator (MYC, SUPT4H1, SUPT5H, CDC20 and MCRS1), as well as ligand-bound nuclear receptors (ESR1, NR1H3, NR3C1, PGR, RARA, RXRA AND VDR) that are not associated with their nuclear receptor coactivators (NCOAs). Involved in maturation and/or transcriptional regulation of mRNA by mediating polyubiquitination and activation of CDK9. Also acts as a regulator of DNA damage response by acting as a suppressor of RNF168, an E3 ubiquitin-protein ligase that promotes accumulation of 'Lys-63'-linked histone H2A and H2AX at DNA damage sites, thereby acting as a guard against excessive spreading of ubiquitinated chromatin at damaged chromosomes. Regulates DNA topoisomerase II binding protein (TopBP1) in the DNA damage response. Ubiquitinates acetylated PCK1. Acts as a positive regulator of the canonical Wnt signaling pathway by mediating (1) ubiquitination and stabilization of CTNNB1, and (2) 'Lys-48'-linked ubiquitination and degradation of TLE3. Promotes disassembly of the mitotic checkpoint complex (MCC) from the APC/C complex by catalyzing ubiquitination of BUB1B, BUB3 and CDC20. Plays an essential role in extraembryonic development. Required for the maintenance of skeletal tissue homeostasis by acting as an inhibitor of hedgehog (HH) signaling. This is E3 ubiquitin-protein ligase UBR5 from Mus musculus (Mouse).